The primary structure comprises 437 residues: Epsilon-sarcoglycan (437 aa).

Residues 1-317 (MLLFWWWELG…LKSRDYYTDF (317 aa)) lie on the Extracellular side of the membrane. N-linked (GlcNAc...) asparagine glycosylation is present at Asn-200. A helical transmembrane segment spans residues 318–338 (LVTLAVPSAVALVLFLILAYI). At 339-437 (MCCRREGVEK…QQQTTGKWYP (99 aa)) the chain is on the cytoplasmic side.

This sequence belongs to the sarcoglycan alpha/epsilon family. Post-translationally, N-glycosylated. Ubiquitinated, leading to its degradation by the proteasome. In terms of tissue distribution, in both neural tissues including cerebellar cortex, striatum, cerebral cortex, thalamus and hippocampus, and non-neural tissues including quadriceps muscle, liver, kidney, spleen, lung, testis and heart. Widely distributed in the brain, with a robust signal obtained from regions with dense neuronal packing such as the pyramidal cell layer of the hippocampus, cerebellar molecular layer, and cerebral cortex. Levels are highest in kidney, moderate in brain and lung, and low in skeletal muscle, liver, spleen and testis.

It is found in the cell membrane. Its subcellular location is the sarcolemma. The protein localises to the cytoplasm. It localises to the cytoskeleton. The protein resides in the cell projection. It is found in the dendrite. Its subcellular location is the golgi apparatus. Functionally, component of the sarcoglycan complex, a subcomplex of the dystrophin-glycoprotein complex which forms a link between the F-actin cytoskeleton and the extracellular matrix. The protein is Epsilon-sarcoglycan of Rattus norvegicus (Rat).